Consider the following 458-residue polypeptide: MPN domain-containing protein (458 aa).

The tract at residues 1–37 (MGSEPPSSPQVVEEGADEEDEELSGAEDADLRSSSGR) is disordered. A compositionally biased stretch (acidic residues) spans 14 to 28 (EGADEEDEELSGAED). Positions 42-137 (TRRGITLRVL…QYKTTWLHKY (96 aa)) constitute an RAMA domain. S94, S96, and W116 together coordinate DNA. Residues 147–175 (SEGEDDEMGDDDEEEGKTTIPVEDKNKKS) are disordered. Acidic residues predominate over residues 148-161 (EGEDDEMGDDDEEE). The MPN domain maps to 229–364 (VAVSSNVLLL…VASTITPFWV (136 aa)). Residues H306, H308, and D319 each coordinate Zn(2+). The JAMM motif signature appears at 306-319 (HSHPRGPALPSLQD).

Belongs to the peptidase M67 family. Post-translationally, degraded following binding to N(6)-methyladenosine methylated DNA (m6A).

Probable protease. Acts as a sensor of N(6)-methyladenosine methylation on DNA (m6A): recognizes and binds m6A DNA, leading to its degradation. Binds only double strand DNA (dsDNA) in a sequence-independent manner. This is MPN domain-containing protein from Danio rerio (Zebrafish).